Here is a 1211-residue protein sequence, read N- to C-terminus: Periplasmic acid trehalase ATC1 (1211 aa).

The Cytoplasmic segment spans residues 1 to 46 (MKRIRSLWFNAEASYSNLNNSPSLRNKNSTGNNSRSKNYRSFSRFD). Residues 47–67 (LINSILLLMMLFLLAIFVTAL) traverse the membrane as a helical segment. Residues 68 to 1211 (YLTKSSRLTY…ATIKEIVLND (1144 aa)) lie on the Periplasmic side of the membrane. The tract at residues 70 to 131 (TKSSRLTYSH…NTAYYDDENM (62 aa)) is required for cell surface targeting. N-linked (GlcNAc...) asparagine glycans are attached at residues Asn-98, Asn-207, Asn-238, Asn-247, Asn-255, Asn-259, Asn-325, Asn-370, Asn-376, and Asn-488. 513 to 514 (WD) provides a ligand contact to substrate. 4 N-linked (GlcNAc...) asparagine glycosylation sites follow: Asn-539, Asn-568, Asn-628, and Asn-638. Glu-644 (proton donor) is an active-site residue. 2 N-linked (GlcNAc...) asparagine glycosylation sites follow: Asn-696 and Asn-705. 711–712 (KQ) contacts substrate. 10 N-linked (GlcNAc...) asparagine glycosylation sites follow: Asn-879, Asn-897, Asn-910, Asn-972, Asn-990, Asn-1031, Asn-1049, Asn-1064, Asn-1147, and Asn-1157.

This sequence belongs to the glycosyl hydrolase 65 family. Glycosylated.

It localises to the membrane. The protein localises to the vacuole lumen. Its subcellular location is the periplasm. It catalyses the reaction alpha,alpha-trehalose + H2O = alpha-D-glucose + beta-D-glucose. Periplasmic acid trehalase that catalyzes hydrolysis of the disaccharide trehalose and required for growth on trehalose as carbon source. Growth on trehalose is strictly respiratory. This is Periplasmic acid trehalase ATC1 from Saccharomyces cerevisiae (strain CEN.PK113-7D) (Baker's yeast).